We begin with the raw amino-acid sequence, 187 residues long: Transcription antitermination protein NusB (187 aa).

The tract at residues 135–187 (APAPESVAEEADEESSDSDAAASDPTDEGDVSDSSGASDEPAAPSAEIQPTVD) is disordered. A compositionally biased stretch (acidic residues) spans 141–151 (VAEEADEESSD).

The protein belongs to the NusB family.

Its function is as follows. Involved in transcription antitermination. Required for transcription of ribosomal RNA (rRNA) genes. Binds specifically to the boxA antiterminator sequence of the ribosomal RNA (rrn) operons. This chain is Transcription antitermination protein NusB, found in Bifidobacterium longum subsp. infantis (strain ATCC 15697 / DSM 20088 / JCM 1222 / NCTC 11817 / S12).